Consider the following 461-residue polypeptide: GTPase Der (461 aa).

EngA-type G domains lie at 2–164 (QSII…NENF) and 197–369 (IKVG…ANFT). Residues 8-15 (GKPNVGKS), 55-59 (DSGGL), 116-119 (NKID), 203-210 (GRVNVGKS), 250-254 (DTAGI), and 314-317 (NKWD) contribute to the GTP site. The KH-like domain occupies 370 to 454 (QKIPTAKLNA…PLIIVSRKKG (85 aa)).

Belongs to the TRAFAC class TrmE-Era-EngA-EngB-Septin-like GTPase superfamily. EngA (Der) GTPase family. In terms of assembly, associates with the 50S ribosomal subunit.

In terms of biological role, GTPase that plays an essential role in the late steps of ribosome biogenesis. The protein is GTPase Der of Campylobacter lari (strain RM2100 / D67 / ATCC BAA-1060).